The primary structure comprises 341 residues: ATP-dependent 6-phosphofructokinase 2 (341 aa).

ATP-binding positions include Gly10, 72–73 (RL), and 102–105 (GEGT). Glu103 lines the Mg(2+) pocket. Residues 125–127 (TID), Arg162, 169–171 (MGR), Glu222, Lys266, and 272–275 (HVQR) contribute to the substrate site. The active-site Proton acceptor is the Asp127.

It belongs to the phosphofructokinase type A (PFKA) family. Mixed-substrate PFK group III subfamily. In terms of assembly, homodimer or homotetramer. Mg(2+) serves as cofactor.

The protein resides in the cytoplasm. The enzyme catalyses beta-D-fructose 6-phosphate + ATP = beta-D-fructose 1,6-bisphosphate + ADP + H(+). Its pathway is carbohydrate degradation; glycolysis; D-glyceraldehyde 3-phosphate and glycerone phosphate from D-glucose: step 3/4. With respect to regulation, allosterically inhibited by phosphoenolpyruvate. Catalyzes the phosphorylation of D-fructose 6-phosphate to fructose 1,6-bisphosphate by ATP, the first committing step of glycolysis. In Streptomyces coelicolor (strain ATCC BAA-471 / A3(2) / M145), this protein is ATP-dependent 6-phosphofructokinase 2.